Reading from the N-terminus, the 359-residue chain is 3-isopropylmalate dehydrogenase (359 aa).

74–85 (GPKWGTGSVRPE) is an NAD(+) binding site. Positions 92, 102, 131, and 220 each coordinate substrate. 3 residues coordinate Mg(2+): aspartate 220, aspartate 245, and aspartate 249. Residue 284–295 (GSAPDLPANKVN) coordinates NAD(+).

The protein belongs to the isocitrate and isopropylmalate dehydrogenases family. Homodimer. Mg(2+) serves as cofactor. Requires Mn(2+) as cofactor.

It is found in the cytoplasm. The catalysed reaction is (2R,3S)-3-isopropylmalate + NAD(+) = 4-methyl-2-oxopentanoate + CO2 + NADH. It participates in amino-acid biosynthesis; L-leucine biosynthesis; L-leucine from 3-methyl-2-oxobutanoate: step 3/4. Its function is as follows. Catalyzes the oxidation of 3-carboxy-2-hydroxy-4-methylpentanoate (3-isopropylmalate) to 3-carboxy-4-methyl-2-oxopentanoate. The product decarboxylates to 4-methyl-2 oxopentanoate. This Kluyveromyces marxianus (Yeast) protein is 3-isopropylmalate dehydrogenase (LEU2).